The primary structure comprises 614 residues: Threonine--tRNA ligase (614 aa).

The segment at 1–141 (MRLLLIHSDY…LSKTIVPGEE (141 aa)) is editing domain. Positions 198-490 (AHVDLMRSKE…ISTQKVPALP (293 aa)) are catalytic. Zn(2+) is bound by residues C290, H342, and H463.

The protein belongs to the class-II aminoacyl-tRNA synthetase family. In terms of assembly, homodimer. It depends on Zn(2+) as a cofactor.

Its subcellular location is the cytoplasm. It catalyses the reaction tRNA(Thr) + L-threonine + ATP = L-threonyl-tRNA(Thr) + AMP + diphosphate + H(+). Functionally, catalyzes the attachment of threonine to tRNA(Thr) in a two-step reaction: L-threonine is first activated by ATP to form Thr-AMP and then transferred to the acceptor end of tRNA(Thr). Also edits incorrectly charged L-seryl-tRNA(Thr). The chain is Threonine--tRNA ligase from Methanoregula boonei (strain DSM 21154 / JCM 14090 / 6A8).